A 246-amino-acid polypeptide reads, in one-letter code: Large ribosomal subunit protein uL3 (246 aa).

Gln-151 is modified (N5-methylglutamine).

It belongs to the universal ribosomal protein uL3 family. As to quaternary structure, part of the 50S ribosomal subunit. Forms a cluster with proteins L14 and L19. Post-translationally, methylated by PrmB.

Functionally, one of the primary rRNA binding proteins, it binds directly near the 3'-end of the 23S rRNA, where it nucleates assembly of the 50S subunit. The polypeptide is Large ribosomal subunit protein uL3 (Bartonella henselae (strain ATCC 49882 / DSM 28221 / CCUG 30454 / Houston 1) (Rochalimaea henselae)).